Here is a 309-residue protein sequence, read N- to C-terminus: Olfactory receptor 4B1 (309 aa).

Topologically, residues 1-23 (MASTSNVTELIFTGLFQDPAVQS) are extracellular. Residue asparagine 6 is glycosylated (N-linked (GlcNAc...) asparagine). A helical transmembrane segment spans residues 24-47 (VCFVVFLPVYLATVVGNGLIVLTV). Residues 48–55 (SISKSLDS) lie on the Cytoplasmic side of the membrane. Residues 56–77 (PMYFFLSCLSLVEISYSSTIAP) form a helical membrane-spanning segment. At 78 to 98 (KFIIDLLAKIKTISLEGCLTQ) the chain is on the extracellular side. Residues cysteine 95 and cysteine 187 are joined by a disulfide bond. Residues 99–118 (IFFFHFFGVAEILLIVVMAY) form a helical membrane-spanning segment. The Cytoplasmic segment spans residues 119–137 (DCYVAICKPLHYMNIISRQ). A helical membrane pass occupies residues 138-156 (LCHLLVAGSWLGGFCHSII). Topologically, residues 157-193 (QILVIIQLPFCGPNVIDHYFCDLQPLFKLACTDTFME) are extracellular. Residues 194–217 (GVIVLANSGLFSVFSFLILVSSYI) traverse the membrane as a helical segment. Topologically, residues 218–233 (VILVNLRNHSAEGRHK) are cytoplasmic. Residues 234–256 (ALSTCASHITVVILFFGPAIFLY) form a helical membrane-spanning segment. Over 257–267 (MRPSSTFTEDK) the chain is Extracellular. A helical membrane pass occupies residues 268–287 (LVAVFYTVITPMLNPIIYTL). Topologically, residues 288 to 309 (RNAEVKIAIRRLWSKKENPGRE) are cytoplasmic.

The protein belongs to the G-protein coupled receptor 1 family.

Its subcellular location is the cell membrane. Its function is as follows. Odorant receptor. This is Olfactory receptor 4B1 (OR4B1) from Homo sapiens (Human).